Consider the following 302-residue polypeptide: MEPTGIVVLDKPKGWTSHDCVHQMRKWFQTRKVGHTGTLDPEVDGVLPICIGKATKVVKYMSDYDKTYIGEVTFGVATTTEDAHGEVVEEKRVNKPFTRTEIEALLQAFIGKIEQTPPYYSAVKVNGKRLYEYARAGIEVERPTRTVEIKALTLTEITTAKPGCFSFAFSVTCTKGTYIRTLAVDIGKKAGYPAHMSKLTRTASGPFTQADAIPLSAFAEMSLDERLNKLRPLDTALQHFPRVTADKELEKRIRNGAVLEKSASFGDGRFLFYNEQGDCLALYQAHPTKAGLIKPETLFCHV.

Aspartate 40 acts as the Nucleophile in catalysis.

The protein belongs to the pseudouridine synthase TruB family. Type 1 subfamily.

The catalysed reaction is uridine(55) in tRNA = pseudouridine(55) in tRNA. In terms of biological role, responsible for synthesis of pseudouridine from uracil-55 in the psi GC loop of transfer RNAs. This Shouchella clausii (strain KSM-K16) (Alkalihalobacillus clausii) protein is tRNA pseudouridine synthase B.